We begin with the raw amino-acid sequence, 638 residues long: Threonine--tRNA ligase (638 aa).

Residues 1–61 enclose the TGS domain; sequence MPEITLPDGS…DNDSKVVIIT (61 aa). The catalytic stretch occupies residues 242 to 533; that stretch reads DHRKLGKKHS…LIEQYEAKFP (292 aa). Residues Cys333, His384, and His510 each contribute to the Zn(2+) site.

The protein belongs to the class-II aminoacyl-tRNA synthetase family. Homodimer. Requires Zn(2+) as cofactor.

It localises to the cytoplasm. It catalyses the reaction tRNA(Thr) + L-threonine + ATP = L-threonyl-tRNA(Thr) + AMP + diphosphate + H(+). Functionally, catalyzes the attachment of threonine to tRNA(Thr) in a two-step reaction: L-threonine is first activated by ATP to form Thr-AMP and then transferred to the acceptor end of tRNA(Thr). Also edits incorrectly charged L-seryl-tRNA(Thr). The protein is Threonine--tRNA ligase of Prochlorococcus marinus subsp. pastoris (strain CCMP1986 / NIES-2087 / MED4).